A 748-amino-acid polypeptide reads, in one-letter code: MFNEITKSVTWNGQVLELSTGKIARQADGAVTVKMGNSVLLCTAVVANKAKEGIGFLPLTINYREMAYAAGKIPGGFFKHEGKASDREVLVSRLIDRPIRPLFHPAFVNETHVTCSVLSYDPETPVDILAIIGASAALSLSPAPYLEIVAASKVGLINGEFVLNPTLALLKTSQLDLVVAGTSDSVMMVESEAHLLSEEQMLEAVKFGFESFQPVIKIIKELAEEAKKPKLEMQALYPASLKKEIEKLFVKEIEQAFAIKSKQERSTNLDLIPEKVLTHFVSDIENKKYSNYQIESALKAIESDILRNEILEKNRRIDGRSTTDIRQIACEIGLLPSAHGSALFTRGETQSLVSTTFGTSLDEQIVDSLEGEYKERFMLNYIFPPYSVNEAMPMKAPSRREVGHGKLAWRAINPILPNKVQFPYSIRVVAETTESNGSSSMATVCGSSLALMYAGVPIKAPVAGIAMGLVKEGKNFAVLSDILGDEDYFGDMDFKVAGTSEGITALQMDIKISGVDFKIMKVALEQARLGRLHILEQMNKVISKPNNELSKNAPSTTTIKIDKDKIRDIIGPGGKVIKEICETSGAKIDISDDGTVSVYASDRDKLKVALDKIKAIVVEPEIGEIFNGTVVKVLDSGAFINYVGNKDGFVHISEVSGERIETVSSVLKQGDIVKVKLIGFDNKGKAKLTIKNADKDKSSNNTKPKTNVNNTKDNSEPEQRRDSSKKRAWNEDNNAETAEVITERKYFN.

D487 and D493 together coordinate Mg(2+). The KH domain occupies 554–613 (PSTTTIKIDKDKIRDIIGPGGKVIKEICETSGAKIDISDDGTVSVYASDRDKLKVALDKI). The 69-residue stretch at 623–691 (GEIFNGTVVK…NKGKAKLTIK (69 aa)) folds into the S1 motif domain. The segment at 691–748 (KNADKDKSSNNTKPKTNVNNTKDNSEPEQRRDSSKKRAWNEDNNAETAEVITERKYFN) is disordered. The span at 699 to 712 (SNNTKPKTNVNNTK) shows a compositional bias: low complexity. Residues 713–722 (DNSEPEQRRD) are compositionally biased toward basic and acidic residues.

The protein belongs to the polyribonucleotide nucleotidyltransferase family. Requires Mg(2+) as cofactor.

It is found in the cytoplasm. It carries out the reaction RNA(n+1) + phosphate = RNA(n) + a ribonucleoside 5'-diphosphate. Functionally, involved in mRNA degradation. Catalyzes the phosphorolysis of single-stranded polyribonucleotides processively in the 3'- to 5'-direction. The polypeptide is Polyribonucleotide nucleotidyltransferase (Rickettsia africae (strain ESF-5)).